Reading from the N-terminus, the 153-residue chain is ATP synthase subunit b' (153 aa).

A helical transmembrane segment spans residues 20-40 (TLPLMAVQVVLLTFILNALFF).

It belongs to the ATPase B chain family. F-type ATPases have 2 components, F(1) - the catalytic core - and F(0) - the membrane proton channel. F(1) has five subunits: alpha(3), beta(3), gamma(1), delta(1), epsilon(1). F(0) has four main subunits: a(1), b(1), b'(1) and c(10-14). The alpha and beta chains form an alternating ring which encloses part of the gamma chain. F(1) is attached to F(0) by a central stalk formed by the gamma and epsilon chains, while a peripheral stalk is formed by the delta, b and b' chains.

It is found in the cellular thylakoid membrane. Functionally, f(1)F(0) ATP synthase produces ATP from ADP in the presence of a proton or sodium gradient. F-type ATPases consist of two structural domains, F(1) containing the extramembraneous catalytic core and F(0) containing the membrane proton channel, linked together by a central stalk and a peripheral stalk. During catalysis, ATP synthesis in the catalytic domain of F(1) is coupled via a rotary mechanism of the central stalk subunits to proton translocation. Its function is as follows. Component of the F(0) channel, it forms part of the peripheral stalk, linking F(1) to F(0). The b'-subunit is a diverged and duplicated form of b found in plants and photosynthetic bacteria. The sequence is that of ATP synthase subunit b' from Prochlorococcus marinus (strain NATL1A).